Here is a 95-residue protein sequence, read N- to C-terminus: Aspartyl/glutamyl-tRNA(Asn/Gln) amidotransferase subunit C (95 aa).

Belongs to the GatC family. Heterotrimer of A, B and C subunits.

The enzyme catalyses L-glutamyl-tRNA(Gln) + L-glutamine + ATP + H2O = L-glutaminyl-tRNA(Gln) + L-glutamate + ADP + phosphate + H(+). The catalysed reaction is L-aspartyl-tRNA(Asn) + L-glutamine + ATP + H2O = L-asparaginyl-tRNA(Asn) + L-glutamate + ADP + phosphate + 2 H(+). In terms of biological role, allows the formation of correctly charged Asn-tRNA(Asn) or Gln-tRNA(Gln) through the transamidation of misacylated Asp-tRNA(Asn) or Glu-tRNA(Gln) in organisms which lack either or both of asparaginyl-tRNA or glutaminyl-tRNA synthetases. The reaction takes place in the presence of glutamine and ATP through an activated phospho-Asp-tRNA(Asn) or phospho-Glu-tRNA(Gln). The protein is Aspartyl/glutamyl-tRNA(Asn/Gln) amidotransferase subunit C of Geobacter sulfurreducens (strain ATCC 51573 / DSM 12127 / PCA).